A 428-amino-acid polypeptide reads, in one-letter code: Adenylosuccinate synthetase (428 aa).

GTP contacts are provided by residues 12–18 (GDEGKGK) and 40–42 (GHT). The active-site Proton acceptor is the Asp-13. Positions 13 and 40 each coordinate Mg(2+). IMP contacts are provided by residues 13-16 (DEGK), 38-41 (NAGH), Thr-128, Arg-142, Gln-223, Thr-238, and Arg-302. His-41 (proton donor) is an active-site residue. 298 to 304 (TTTGRPR) is a substrate binding site. GTP contacts are provided by residues Arg-304, 330 to 332 (KLD), and 412 to 414 (SVG).

It belongs to the adenylosuccinate synthetase family. In terms of assembly, homodimer. The cofactor is Mg(2+).

It localises to the cytoplasm. It catalyses the reaction IMP + L-aspartate + GTP = N(6)-(1,2-dicarboxyethyl)-AMP + GDP + phosphate + 2 H(+). The protein operates within purine metabolism; AMP biosynthesis via de novo pathway; AMP from IMP: step 1/2. Plays an important role in the de novo pathway of purine nucleotide biosynthesis. Catalyzes the first committed step in the biosynthesis of AMP from IMP. This chain is Adenylosuccinate synthetase, found in Desulforamulus reducens (strain ATCC BAA-1160 / DSM 100696 / MI-1) (Desulfotomaculum reducens).